Consider the following 259-residue polypeptide: Virulence plasmid ParA family protein pGP5-D (259 aa).

ATP is bound at residue 9-16 (FKGGTGKT).

It belongs to the ParA family.

The protein is Virulence plasmid ParA family protein pGP5-D of Chlamydia psittaci (Chlamydophila psittaci).